Reading from the N-terminus, the 332-residue chain is UDP-3-O-acylglucosamine N-acyltransferase (332 aa).

H235 serves as the catalytic Proton acceptor.

The protein belongs to the transferase hexapeptide repeat family. LpxD subfamily. Homotrimer.

It carries out the reaction a UDP-3-O-[(3R)-3-hydroxyacyl]-alpha-D-glucosamine + a (3R)-hydroxyacyl-[ACP] = a UDP-2-N,3-O-bis[(3R)-3-hydroxyacyl]-alpha-D-glucosamine + holo-[ACP] + H(+). It participates in bacterial outer membrane biogenesis; LPS lipid A biosynthesis. Its function is as follows. Catalyzes the N-acylation of UDP-3-O-acylglucosamine using 3-hydroxyacyl-ACP as the acyl donor. Is involved in the biosynthesis of lipid A, a phosphorylated glycolipid that anchors the lipopolysaccharide to the outer membrane of the cell. The sequence is that of UDP-3-O-acylglucosamine N-acyltransferase from Fusobacterium nucleatum subsp. nucleatum (strain ATCC 25586 / DSM 15643 / BCRC 10681 / CIP 101130 / JCM 8532 / KCTC 2640 / LMG 13131 / VPI 4355).